Here is a 32-residue protein sequence, read N- to C-terminus: ALTGRRPSVVYLHAAQCTGCSEALLRTTKPFR.

Residues Cys17 and Cys20 each coordinate [4Fe-4S] cluster.

Belongs to the [NiFe]/[NiFeSe] hydrogenase small subunit family. Heterodimer of a large and a small subunit. [3Fe-4S] cluster serves as cofactor. The cofactor is [4Fe-4S] cluster.

It is found in the periplasm. It catalyses the reaction 2 Fe(III)-[cytochrome c3] + H2 = 2 Fe(II)-[cytochrome c3] + 2 H(+). The polypeptide is Periplasmic [NiFe] hydrogenase small subunit (hydA) (Desulfovibrio multispirans).